Reading from the N-terminus, the 234-residue chain is 2-C-methyl-D-erythritol 4-phosphate cytidylyltransferase (234 aa).

It belongs to the IspD/TarI cytidylyltransferase family. IspD subfamily.

The catalysed reaction is 2-C-methyl-D-erythritol 4-phosphate + CTP + H(+) = 4-CDP-2-C-methyl-D-erythritol + diphosphate. The protein operates within isoprenoid biosynthesis; isopentenyl diphosphate biosynthesis via DXP pathway; isopentenyl diphosphate from 1-deoxy-D-xylulose 5-phosphate: step 2/6. Its function is as follows. Catalyzes the formation of 4-diphosphocytidyl-2-C-methyl-D-erythritol from CTP and 2-C-methyl-D-erythritol 4-phosphate (MEP). The protein is 2-C-methyl-D-erythritol 4-phosphate cytidylyltransferase of Desulforamulus reducens (strain ATCC BAA-1160 / DSM 100696 / MI-1) (Desulfotomaculum reducens).